The primary structure comprises 190 residues: Elongation factor P (190 aa).

This sequence belongs to the elongation factor P family.

It localises to the cytoplasm. The protein operates within protein biosynthesis; polypeptide chain elongation. Functionally, involved in peptide bond synthesis. Stimulates efficient translation and peptide-bond synthesis on native or reconstituted 70S ribosomes in vitro. Probably functions indirectly by altering the affinity of the ribosome for aminoacyl-tRNA, thus increasing their reactivity as acceptors for peptidyl transferase. This is Elongation factor P from Persephonella marina (strain DSM 14350 / EX-H1).